An 89-amino-acid chain; its full sequence is Small ribosomal subunit protein uS19 (89 aa).

This sequence belongs to the universal ribosomal protein uS19 family.

Protein S19 forms a complex with S13 that binds strongly to the 16S ribosomal RNA. This chain is Small ribosomal subunit protein uS19, found in Stenotrophomonas maltophilia (strain R551-3).